The chain runs to 606 residues: Aspartate--tRNA(Asp/Asn) ligase (606 aa).

Residue E172 coordinates L-aspartate. Positions 196 to 199 are aspartate; sequence QLFK. L-aspartate is bound at residue R218. Residues 218-220 and Q227 contribute to the ATP site; that span reads RDE. H448 contributes to the L-aspartate binding site. E482 provides a ligand contact to ATP. L-aspartate is bound at residue R489. 534–537 is an ATP binding site; sequence GWDR.

This sequence belongs to the class-II aminoacyl-tRNA synthetase family. Type 1 subfamily. Homodimer.

Its subcellular location is the cytoplasm. The catalysed reaction is tRNA(Asx) + L-aspartate + ATP = L-aspartyl-tRNA(Asx) + AMP + diphosphate. In terms of biological role, aspartyl-tRNA synthetase with relaxed tRNA specificity since it is able to aspartylate not only its cognate tRNA(Asp) but also tRNA(Asn). Reaction proceeds in two steps: L-aspartate is first activated by ATP to form Asp-AMP and then transferred to the acceptor end of tRNA(Asp/Asn). The sequence is that of Aspartate--tRNA(Asp/Asn) ligase from Saccharopolyspora erythraea (strain ATCC 11635 / DSM 40517 / JCM 4748 / NBRC 13426 / NCIMB 8594 / NRRL 2338).